The following is a 321-amino-acid chain: Putative sulfotransferase vep-2 (321 aa).

The chain crosses the membrane as a helical span at residues 11–31 (IARVLIIIASISVICITLFIS).

It to C.elegans C41C4.1 and C18B2.2.

It is found in the membrane. The chain is Putative sulfotransferase vep-2 from Caenorhabditis elegans.